The sequence spans 171 residues: Shikimate kinase (171 aa).

13–18 contacts ATP; sequence GVGKST. Ser17 provides a ligand contact to Mg(2+). 3 residues coordinate substrate: Asp35, Arg59, and Gly81. Arg118 contributes to the ATP binding site. Substrate is bound at residue Arg136. Position 153 (Arg153) interacts with ATP.

Belongs to the shikimate kinase family. As to quaternary structure, monomer. It depends on Mg(2+) as a cofactor.

The protein resides in the cytoplasm. It catalyses the reaction shikimate + ATP = 3-phosphoshikimate + ADP + H(+). Its pathway is metabolic intermediate biosynthesis; chorismate biosynthesis; chorismate from D-erythrose 4-phosphate and phosphoenolpyruvate: step 5/7. Functionally, catalyzes the specific phosphorylation of the 3-hydroxyl group of shikimic acid using ATP as a cosubstrate. The sequence is that of Shikimate kinase from Streptomyces avermitilis (strain ATCC 31267 / DSM 46492 / JCM 5070 / NBRC 14893 / NCIMB 12804 / NRRL 8165 / MA-4680).